Here is a 604-residue protein sequence, read N- to C-terminus: Kelch-like protein 15 (604 aa).

The 68-residue stretch at 31–98 (LDVTLVIEDH…MYYGTIELSM (68 aa)) folds into the BTB domain. The region spanning 133–237 (CAEIMRLLDD…TPTSVFEKVK (105 aa)) is the BACK domain. Kelch repeat units follow at residues 328–379 (FVFL…VIGK), 381–426 (IYAV…VLNN), 428–473 (LFIT…NKSK), 489–542 (KLYV…VLDK), and 544–590 (IMVL…VCNL).

In terms of assembly, homodimer. Dimerization does not affect PPP2R5B-binding, but is required for its proteasomal degradation. Interacts with CUL3. Directly interacts with PPP2R5B; this interaction leads to PPP2R5B proteasomal degradation. Interacts with RBBP8/CtIP; this interaction leads to RBBP8 proteasomal degradation. Interacts with PACMP micropeptide; interaction prevents ubiquitination and degradation of RBBP8/CtIP.

It is found in the nucleus. Its pathway is protein modification; protein ubiquitination. Functionally, substrate-specific adapter for CUL3 E3 ubiquitin-protein ligase complex. Acts as an adapter for CUL3 to target the serine/threonine-protein phosphatase 2A (PP2A) subunit PPP2R5B for ubiquitination and subsequent proteasomal degradation, thus promoting exchange with other regulatory subunits. Acts as an adapter for CUL3 to target the DNA-end resection factor RBBP8/CtIP for ubiquitination and subsequent proteasomal degradation. Through the regulation of RBBP8/CtIP protein turnover, plays a key role in DNA damage response, favoring DNA double-strand repair through error-prone non-homologous end joining (NHEJ) over error-free, RBBP8-mediated homologous recombination (HR). The chain is Kelch-like protein 15 (KLHL15) from Homo sapiens (Human).